The chain runs to 118 residues: MSVNPLIAKITESQLRNDIPDFRAGDSVRVHARIVEGSRERIQIFEGVVIKRRGEGISETYTVRKISNGIGVERTFPLHTPRVDKIEVTRHGRVRRAKLYYLRALHGKAARIPERRRG.

The protein belongs to the bacterial ribosomal protein bL19 family.

Its function is as follows. This protein is located at the 30S-50S ribosomal subunit interface and may play a role in the structure and function of the aminoacyl-tRNA binding site. The sequence is that of Large ribosomal subunit protein bL19 from Ligilactobacillus salivarius (strain UCC118) (Lactobacillus salivarius).